Here is a 142-residue protein sequence, read N- to C-terminus: ATP synthase epsilon chain (142 aa).

It belongs to the ATPase epsilon chain family. F-type ATPases have 2 components, CF(1) - the catalytic core - and CF(0) - the membrane proton channel. CF(1) has five subunits: alpha(3), beta(3), gamma(1), delta(1), epsilon(1). CF(0) has three main subunits: a, b and c.

The protein localises to the cell inner membrane. Functionally, produces ATP from ADP in the presence of a proton gradient across the membrane. The sequence is that of ATP synthase epsilon chain from Maridesulfovibrio salexigens (strain ATCC 14822 / DSM 2638 / NCIMB 8403 / VKM B-1763) (Desulfovibrio salexigens).